The chain runs to 393 residues: Rubredoxin-NAD(+) reductase (393 aa).

FAD-binding positions include Ser-9–Ala-12, Cys-33–Ala-34, Lys-42, Val-80, Glu-162, Asp-282, Val-294, and Lys-325.

The protein belongs to the FAD-dependent oxidoreductase family. As to quaternary structure, homodimer. FAD is required as a cofactor.

The protein resides in the cytoplasm. The enzyme catalyses 2 reduced [rubredoxin] + NAD(+) + H(+) = 2 oxidized [rubredoxin] + NADH. It functions in the pathway hydrocarbon metabolism; alkane degradation. In terms of biological role, involved in the hydrocarbon hydroxylating system, which transfers electrons from NADH to rubredoxin reductase and then through rubredoxin to alkane 1 monooxygenase. In Acinetobacter baylyi (strain ATCC 33305 / BD413 / ADP1), this protein is Rubredoxin-NAD(+) reductase (rubB).